Consider the following 771-residue polypeptide: PH and SEC7 domain-containing protein 2 (771 aa).

Disordered regions lie at residues 1–67 (MEED…PDVA) and 107–136 (GDNA…VRDG). Positions 47–66 (GHERRGTPADTEEPTKDPDV) are enriched in basic and acidic residues. Ser191 is subject to Phosphoserine. Disordered regions lie at residues 207–230 (GDMG…SSSR) and 244–307 (PNGF…ANGC). The segment covering 218–230 (LGSPLRRSISSSR) has biased composition (low complexity). Residues 257-266 (GDEDDDEEDT) show a composition bias toward acidic residues. Residues 260–462 (DDDEEDTDKL…KTLYNSIKNE (203 aa)) form the SEC7 domain. The segment covering 288 to 299 (ELSSSEGLEPGS) has biased composition (low complexity). One can recognise a PH domain in the interval 512–625 (TTYKHGVLTR…WILRINLVAA (114 aa)). The helical transmembrane segment at 622-639 (LVAAIFSAPAFPAAVSSM) threads the bilayer. A coiled-coil region spans residues 651 to 680 (TTRLCQEEQLRSHENKLRQLTAELAEHRCH). The segment at 739–771 (DDPSLRKTHSSPALSQGHVTGSKTTKDATGPDT) is disordered. Residues 748-761 (SSPALSQGHVTGSK) are compositionally biased toward polar residues.

This sequence belongs to the PSD family.

Its subcellular location is the cell membrane. It is found in the cell projection. The protein localises to the ruffle membrane. The protein resides in the cleavage furrow. This is PH and SEC7 domain-containing protein 2 (PSD2) from Homo sapiens (Human).